A 118-amino-acid chain; its full sequence is Protein MGF 110-6L (118 aa).

A signal peptide spans 1-18 (MLVIFLGILGLLASQVSS). N96 is a glycosylation site (N-linked (GlcNAc...) asparagine; by host). Residues 115-118 (KDEL) carry the Prevents secretion from ER motif.

Belongs to the asfivirus MGF 110 family. In terms of processing, N-glycosylated.

It localises to the host endoplasmic reticulum lumen. Plays a role in virus cell tropism, and may be required for efficient virus replication in macrophages. The chain is Protein MGF 110-6L from African swine fever virus (isolate Tick/South Africa/Pretoriuskop Pr4/1996) (ASFV).